The primary structure comprises 434 residues: Glutamate-1-semialdehyde 2,1-aminomutase (434 aa).

Lys271 carries the N6-(pyridoxal phosphate)lysine modification.

Belongs to the class-III pyridoxal-phosphate-dependent aminotransferase family. HemL subfamily. Homodimer. It depends on pyridoxal 5'-phosphate as a cofactor.

Its subcellular location is the cytoplasm. The catalysed reaction is (S)-4-amino-5-oxopentanoate = 5-aminolevulinate. Its pathway is porphyrin-containing compound metabolism; protoporphyrin-IX biosynthesis; 5-aminolevulinate from L-glutamyl-tRNA(Glu): step 2/2. The protein operates within porphyrin-containing compound metabolism; chlorophyll biosynthesis. The sequence is that of Glutamate-1-semialdehyde 2,1-aminomutase from Prochlorococcus marinus (strain MIT 9312).